A 267-amino-acid polypeptide reads, in one-letter code: 5'-nucleotidase SurE (267 aa).

4 residues coordinate a divalent metal cation: Asp9, Asp10, Ser41, and Asn95.

The protein belongs to the SurE nucleotidase family. The cofactor is a divalent metal cation.

It localises to the cytoplasm. The enzyme catalyses a ribonucleoside 5'-phosphate + H2O = a ribonucleoside + phosphate. Nucleotidase that shows phosphatase activity on nucleoside 5'-monophosphates. The protein is 5'-nucleotidase SurE of Aeropyrum pernix (strain ATCC 700893 / DSM 11879 / JCM 9820 / NBRC 100138 / K1).